The sequence spans 700 residues: Elongation factor G (700 aa).

One can recognise a tr-type G domain in the interval 10–286 (TKVRNIGIMA…AVIDYLPSPL (277 aa)). GTP-binding positions include 19–26 (AHIDAGKT), 83–87 (DTPGH), and 137–140 (NKMD).

The protein belongs to the TRAFAC class translation factor GTPase superfamily. Classic translation factor GTPase family. EF-G/EF-2 subfamily.

The protein localises to the cytoplasm. Its function is as follows. Catalyzes the GTP-dependent ribosomal translocation step during translation elongation. During this step, the ribosome changes from the pre-translocational (PRE) to the post-translocational (POST) state as the newly formed A-site-bound peptidyl-tRNA and P-site-bound deacylated tRNA move to the P and E sites, respectively. Catalyzes the coordinated movement of the two tRNA molecules, the mRNA and conformational changes in the ribosome. This is Elongation factor G from Kineococcus radiotolerans (strain ATCC BAA-149 / DSM 14245 / SRS30216).